The following is a 294-amino-acid chain: Hydroxyethylthiazole kinase (294 aa).

Substrate is bound at residue M57. 2 residues coordinate ATP: R132 and S196. Residue G223 coordinates substrate.

The protein belongs to the Thz kinase family. Requires Mg(2+) as cofactor.

It catalyses the reaction 5-(2-hydroxyethyl)-4-methylthiazole + ATP = 4-methyl-5-(2-phosphooxyethyl)-thiazole + ADP + H(+). The protein operates within cofactor biosynthesis; thiamine diphosphate biosynthesis; 4-methyl-5-(2-phosphoethyl)-thiazole from 5-(2-hydroxyethyl)-4-methylthiazole: step 1/1. Functionally, catalyzes the phosphorylation of the hydroxyl group of 4-methyl-5-beta-hydroxyethylthiazole (THZ). This Bifidobacterium adolescentis (strain ATCC 15703 / DSM 20083 / NCTC 11814 / E194a) protein is Hydroxyethylthiazole kinase.